We begin with the raw amino-acid sequence, 272 residues long: Phosphate import ATP-binding protein PstB 2 (272 aa).

Residues 26-267 (IEINNLCLNY…PIHKQTEDYI (242 aa)) enclose the ABC transporter domain. An ATP-binding site is contributed by 58–65 (GPSGCGKS).

It belongs to the ABC transporter superfamily. Phosphate importer (TC 3.A.1.7) family. The complex is composed of two ATP-binding proteins (PstB), two transmembrane proteins (PstC and PstA) and a solute-binding protein (PstS).

It is found in the cell inner membrane. It catalyses the reaction phosphate(out) + ATP + H2O = ADP + 2 phosphate(in) + H(+). Its function is as follows. Part of the ABC transporter complex PstSACB involved in phosphate import. Responsible for energy coupling to the transport system. This is Phosphate import ATP-binding protein PstB 2 from Aliivibrio fischeri (strain ATCC 700601 / ES114) (Vibrio fischeri).